The sequence spans 276 residues: Protease HtpX homolog (276 aa).

Residues 16-36 (LFIWFGGMIAGQTGMVIAFLV) form a helical membrane-spanning segment. Position 130 (histidine 130) interacts with Zn(2+). Residue glutamate 131 is part of the active site. Histidine 134 contacts Zn(2+). Transmembrane regions (helical) follow at residues 142–162 (IGTV…FGMF) and 173–193 (IFVM…IQMT). Position 199 (glutamate 199) interacts with Zn(2+).

Belongs to the peptidase M48B family. Requires Zn(2+) as cofactor.

The protein resides in the cell inner membrane. The chain is Protease HtpX homolog from Sulfurovum sp. (strain NBC37-1).